The sequence spans 428 residues: Serine--tRNA ligase (428 aa).

231-233 (TAE) is an L-serine binding site. 262–264 (RSE) is an ATP binding site. Position 285 (Glu-285) interacts with L-serine. 349–352 (EISS) provides a ligand contact to ATP. Residue Ser-385 coordinates L-serine.

The protein belongs to the class-II aminoacyl-tRNA synthetase family. Type-1 seryl-tRNA synthetase subfamily. Homodimer. The tRNA molecule binds across the dimer.

The protein resides in the cytoplasm. It carries out the reaction tRNA(Ser) + L-serine + ATP = L-seryl-tRNA(Ser) + AMP + diphosphate + H(+). The enzyme catalyses tRNA(Sec) + L-serine + ATP = L-seryl-tRNA(Sec) + AMP + diphosphate + H(+). It functions in the pathway aminoacyl-tRNA biosynthesis; selenocysteinyl-tRNA(Sec) biosynthesis; L-seryl-tRNA(Sec) from L-serine and tRNA(Sec): step 1/1. Its function is as follows. Catalyzes the attachment of serine to tRNA(Ser). Is also able to aminoacylate tRNA(Sec) with serine, to form the misacylated tRNA L-seryl-tRNA(Sec), which will be further converted into selenocysteinyl-tRNA(Sec). The chain is Serine--tRNA ligase from Staphylococcus aureus (strain USA300).